Consider the following 874-residue polypeptide: Alanine--tRNA ligase (874 aa).

Zn(2+) is bound by residues His562, His566, Cys665, and His669.

It belongs to the class-II aminoacyl-tRNA synthetase family. It depends on Zn(2+) as a cofactor.

The protein localises to the cytoplasm. It carries out the reaction tRNA(Ala) + L-alanine + ATP = L-alanyl-tRNA(Ala) + AMP + diphosphate. In terms of biological role, catalyzes the attachment of alanine to tRNA(Ala) in a two-step reaction: alanine is first activated by ATP to form Ala-AMP and then transferred to the acceptor end of tRNA(Ala). Also edits incorrectly charged Ser-tRNA(Ala) and Gly-tRNA(Ala) via its editing domain. The chain is Alanine--tRNA ligase from Stutzerimonas stutzeri (strain A1501) (Pseudomonas stutzeri).